Reading from the N-terminus, the 382-residue chain is Putative glutamate--cysteine ligase 2-1 (382 aa).

This sequence belongs to the glutamate--cysteine ligase type 2 family. YbdK subfamily.

It catalyses the reaction L-cysteine + L-glutamate + ATP = gamma-L-glutamyl-L-cysteine + ADP + phosphate + H(+). Its function is as follows. ATP-dependent carboxylate-amine ligase which exhibits weak glutamate--cysteine ligase activity. The polypeptide is Putative glutamate--cysteine ligase 2-1 (Frankia alni (strain DSM 45986 / CECT 9034 / ACN14a)).